The primary structure comprises 244 residues: Centromere protein H (244 aa).

Met-1 is subject to N-acetylmethionine. The interval 1-33 is disordered; that stretch reads METQSEEQAVTKPADSGGEGGPPQVAGAQAARP. Ser-16 is modified (phosphoserine). Residues 22 to 31 are compositionally biased toward low complexity; the sequence is PPQVAGAQAA. Lys-64 participates in a covalent cross-link: Glycyl lysine isopeptide (Lys-Gly) (interchain with G-Cter in SUMO2). Thr-65 carries the phosphothreonine modification. Coiled-coil stretches lie at residues 66-104 and 146-189; these read PEQIMQEKQIEAKIEELENEVEEAKTAFEMKKLALDRMQ and DLEE…MENS.

This sequence belongs to the CENP-H/MCM16 family. As to quaternary structure, self-associates. Component of the CENPA-NAC complex, at least composed of CENPA, CENPC, CENPH, CENPM, CENPN, CENPT and CENPU. The CENPA-NAC complex interacts with the CENPA-CAD complex, composed of CENPI, CENPK, CENPL, CENPO, CENPP, CENPQ, CENPR and CENPS. Interacts with KIF2C and NDC80.

It is found in the nucleus. It localises to the chromosome. The protein localises to the centromere. The protein resides in the kinetochore. In terms of biological role, component of the CENPA-NAC (nucleosome-associated) complex, a complex that plays a central role in assembly of kinetochore proteins, mitotic progression and chromosome segregation. The CENPA-NAC complex recruits the CENPA-CAD (nucleosome distal) complex and may be involved in incorporation of newly synthesized CENPA into centromeres. The protein is Centromere protein H (CENPH) of Bos taurus (Bovine).